A 113-amino-acid chain; its full sequence is Photosystem II reaction center Psb28 protein (113 aa).

It belongs to the Psb28 family. As to quaternary structure, part of the photosystem II complex.

It localises to the cellular thylakoid membrane. This chain is Photosystem II reaction center Psb28 protein, found in Nostoc punctiforme (strain ATCC 29133 / PCC 73102).